Reading from the N-terminus, the 577-residue chain is Protein hinderin (577 aa).

Serine 21 is subject to Phosphoserine. The stretch at 91-167 (LKDLCLEDKR…CQELLSLYQK (77 aa)) forms a coiled coil. Residue serine 179 is modified to Phosphoserine. The segment at 251 to 282 (TLHHPKDDLDKIPSETTTCNCESPGRKPAVPT) is disordered. The segment covering 254–263 (HPKDDLDKIP) has biased composition (basic and acidic residues). The stretch at 358–402 (LKKQISEDRKQQLMLQKMELEIEKERLQHLLAQQETKLLLKQQQL) forms a coiled coil. Disordered regions lie at residues 425–444 (SSSI…RKER), 449–492 (FHSH…GSLK), and 520–540 (LSPN…GAWN). Over residues 449–468 (FHSHMKDDAQWSCQKKDTCR) the composition is skewed to basic and acidic residues. Phosphoserine occurs at positions 490 and 521.

Interacts (via N- and C-terminal domains) with SMC3 (via central hinge region). In terms of tissue distribution, widely expressed.

In terms of biological role, competes with SMC1 for binding to SMC3. May affect the availability of SMC3 to engage in the formation of multimeric protein complexes. This is Protein hinderin (KIAA1328) from Homo sapiens (Human).